Consider the following 295-residue polypeptide: Translational activator of cytochrome c oxidase 1 (295 aa).

Lys162 carries the N6-acetyllysine modification. A coiled-coil region spans residues 190–225 (VEDREKKAVNLERALELAIEAGAEDVREAEDEEEEK).

It belongs to the TACO1 family.

The protein localises to the mitochondrion. Its function is as follows. Acts as a translational activator of mitochondrially-encoded cytochrome c oxidase 1. The chain is Translational activator of cytochrome c oxidase 1 from Rattus norvegicus (Rat).